Reading from the N-terminus, the 321-residue chain is Methionyl-tRNA formyltransferase (321 aa).

Position 111-114 (111-114 (SLLP)) interacts with (6S)-5,6,7,8-tetrahydrofolate.

The protein belongs to the Fmt family.

It carries out the reaction L-methionyl-tRNA(fMet) + (6R)-10-formyltetrahydrofolate = N-formyl-L-methionyl-tRNA(fMet) + (6S)-5,6,7,8-tetrahydrofolate + H(+). Attaches a formyl group to the free amino group of methionyl-tRNA(fMet). The formyl group appears to play a dual role in the initiator identity of N-formylmethionyl-tRNA by promoting its recognition by IF2 and preventing the misappropriation of this tRNA by the elongation apparatus. In Bifidobacterium animalis subsp. lactis (strain AD011), this protein is Methionyl-tRNA formyltransferase.